A 310-amino-acid chain; its full sequence is MTKKIVFMGTPFFAVPILKSLYEKNYIIPAVYTQPPKKSQRGQKINKSPIQIVAEDYNIDCRTPDTLKTNKEEYEYLKQLDLDLVIVVAYGQIIPKEYLNLAKKGFINIHASLLPKWRGAAPIQRSIMNLEKETGISIMKIGEKLDTGPVGNIYRIKIKDSDNAETISTKLSILASEKIIENVENIFEDKLTFKEQDDTSATYASKIEKSEGEIKWNDNAESIIGKINGLYPSPGAFFIFKDERYKILKAELGNKSGEIGEVMSNDLEISCGNQKSIKIIEIQRQGKKPQNINEFVLGSQIIKGSRITNV.

112–115 serves as a coordination point for (6S)-5,6,7,8-tetrahydrofolate; sequence SLLP.

The protein belongs to the Fmt family.

The enzyme catalyses L-methionyl-tRNA(fMet) + (6R)-10-formyltetrahydrofolate = N-formyl-L-methionyl-tRNA(fMet) + (6S)-5,6,7,8-tetrahydrofolate + H(+). In terms of biological role, attaches a formyl group to the free amino group of methionyl-tRNA(fMet). The formyl group appears to play a dual role in the initiator identity of N-formylmethionyl-tRNA by promoting its recognition by IF2 and preventing the misappropriation of this tRNA by the elongation apparatus. The protein is Methionyl-tRNA formyltransferase of Pelagibacter ubique (strain HTCC1062).